We begin with the raw amino-acid sequence, 397 residues long: 3-hydroxy-3-methylglutaryl-coenzyme A reductase (397 aa).

Catalysis depends on charge relay system residues Glu-96 and Asp-301. His-391 functions as the Proton donor in the catalytic mechanism.

It belongs to the HMG-CoA reductase family.

The enzyme catalyses (R)-mevalonate + 2 NADP(+) + CoA = (3S)-3-hydroxy-3-methylglutaryl-CoA + 2 NADPH + 2 H(+). Its pathway is metabolic intermediate biosynthesis; (R)-mevalonate biosynthesis; (R)-mevalonate from acetyl-CoA: step 3/3. Functionally, converts HMG-CoA to mevalonate. The protein is 3-hydroxy-3-methylglutaryl-coenzyme A reductase (hmgA) of Methanothermobacter thermautotrophicus (strain ATCC 29096 / DSM 1053 / JCM 10044 / NBRC 100330 / Delta H) (Methanobacterium thermoautotrophicum).